We begin with the raw amino-acid sequence, 370 residues long: Histidinol-phosphate aminotransferase (370 aa).

The residue at position 222 (lysine 222) is an N6-(pyridoxal phosphate)lysine.

This sequence belongs to the class-II pyridoxal-phosphate-dependent aminotransferase family. Histidinol-phosphate aminotransferase subfamily. Homodimer. Pyridoxal 5'-phosphate is required as a cofactor.

The catalysed reaction is L-histidinol phosphate + 2-oxoglutarate = 3-(imidazol-4-yl)-2-oxopropyl phosphate + L-glutamate. It participates in amino-acid biosynthesis; L-histidine biosynthesis; L-histidine from 5-phospho-alpha-D-ribose 1-diphosphate: step 7/9. The protein is Histidinol-phosphate aminotransferase of Bacillus cytotoxicus (strain DSM 22905 / CIP 110041 / 391-98 / NVH 391-98).